The following is a 336-amino-acid chain: MAELRLGYKASAEQFAPRELVELGVAAEAHGMDSATVSDHFQPWRHQGGHASFSLSWMTAVGERTNRILLGTSVLTPTFRYNPAVIGQAFATMGCLYPNRVFLGVGTGEALNEVATGYQGAWPEFKERFARLRESVRLMRELWRGDRVDFDGDYYQLKGASIYDVPEGGVPIYIAAGGPEVAKYAGRAGEGFVCTSGKGEELYTEKLIPAVLEGAAVAGRDADDIDKMIEIKMSYDPDPEQALSNIRFWAPLSLAAEQKHSIDDPIEMEKVADALPIEQVAKRWIVVSDPDEAVARVGQYVTWGLNHLVFHAPGHNQRRFLELFEKDLAPRLRRLG.

A coenzyme F420-(gamma-Glu)n-binding site is contributed by aspartate 39. Histidine 40 functions as the Proton donor in the catalytic mechanism. Coenzyme F420-(gamma-Glu)n is bound by residues threonine 76 and 107-108 (TG). The Proton acceptor role is filled by glutamate 109. Coenzyme F420-(gamma-Glu)n-binding positions include asparagine 112, 177-178 (GG), and 180-181 (EV). 4 residues coordinate substrate: threonine 195, lysine 198, lysine 259, and arginine 283.

It belongs to the F420-dependent glucose-6-phosphate dehydrogenase family. In terms of assembly, homodimer.

It catalyses the reaction oxidized coenzyme F420-(gamma-L-Glu)(n) + D-glucose 6-phosphate + H(+) = 6-phospho-D-glucono-1,5-lactone + reduced coenzyme F420-(gamma-L-Glu)(n). In terms of biological role, catalyzes the coenzyme F420-dependent oxidation of glucose 6-phosphate (G6P) to 6-phosphogluconolactone. Appears to have a role in resistance to oxidative stress, via its consumption of G6P that serves as a source of reducing power to combat oxidative stress in mycobacteria. The sequence is that of F420-dependent glucose-6-phosphate dehydrogenase from Mycobacterium leprae (strain Br4923).